The following is a 692-amino-acid chain: Elongation factor G (692 aa).

Positions 8–282 (AKTRNIGIMA…AVIAYLPSPL (275 aa)) constitute a tr-type G domain. GTP-binding positions include 17–24 (AHVDAGKT), 81–85 (DTPGH), and 135–138 (NKMD).

The protein belongs to the TRAFAC class translation factor GTPase superfamily. Classic translation factor GTPase family. EF-G/EF-2 subfamily.

It localises to the cytoplasm. Functionally, catalyzes the GTP-dependent ribosomal translocation step during translation elongation. During this step, the ribosome changes from the pre-translocational (PRE) to the post-translocational (POST) state as the newly formed A-site-bound peptidyl-tRNA and P-site-bound deacylated tRNA move to the P and E sites, respectively. Catalyzes the coordinated movement of the two tRNA molecules, the mRNA and conformational changes in the ribosome. The protein is Elongation factor G of Streptococcus pyogenes serotype M49 (strain NZ131).